Here is a 121-residue protein sequence, read N- to C-terminus: Large ribosomal subunit protein bL20 (121 aa).

It belongs to the bacterial ribosomal protein bL20 family.

Binds directly to 23S ribosomal RNA and is necessary for the in vitro assembly process of the 50S ribosomal subunit. It is not involved in the protein synthesizing functions of that subunit. The chain is Large ribosomal subunit protein bL20 from Mycoplasma mycoides subsp. mycoides SC (strain CCUG 32753 / NCTC 10114 / PG1).